Consider the following 477-residue polypeptide: Calcium uptake protein 1, mitochondrial (477 aa).

A mitochondrion-targeting transit peptide spans 1–33; sequence MFRLNALSALAELAVGSRWYHGTSQPTQTKRRL. The interval 55 to 108 is disordered; the sequence is AHAESPPSVNSKKTDAGDKGKSKDTREVSSHEGSAADTAAEPYPEEKKKKRSGF. Basic and acidic residues predominate over residues 66–84; that stretch reads KKTDAGDKGKSKDTREVSS. Positions 101–112 are polybasic region; sequence KKKKRSGFRDRK. The residue at position 124 (serine 124) is a Phosphoserine. The k/R-ring stretch occupies residues 128–131; sequence KIFR. Residues 220-255 form the EF-hand 1 domain; it reads TPQRNFEIAFKMFDLNGDGEVDMEEFEQVQSIIRSQ. Ca(2+) contacts are provided by aspartate 233, asparagine 235, aspartate 237, glutamate 239, and glutamate 244. Residues 261 to 265 are k/R-ring; the sequence is RHRDR. The region spanning 356 to 376 is the EF-hand 2; degenerate domain; sequence KDGKGLTFQEVENFFTFLKNI. The EF-hand 3 domain occupies 410 to 445; sequence LSDHVCDVVFALFDCDGNGELSNKEFVSIMKQRLMR. 5 residues coordinate Ca(2+): aspartate 423, aspartate 425, asparagine 427, glutamate 429, and glutamate 434. Arginine 457 carries the asymmetric dimethylarginine modification. Residues 457 to 467 form a C-helix region region; the sequence is RLMQAMWKCAQ.

It belongs to the MICU1 family. MICU1 subfamily. In terms of assembly, heterodimer; disulfide-linked; heterodimerizes with MICU2 or MICU3. Homodimer; disulfide-linked. Component of the uniplex complex, composed of MCU, EMRE/SMDT1, MICU1 and MICU2 (or MICU3) in a 4:4:1:1 stoichiometry. The composition of calcium sensors within the uniplex complex can differ depending on tissues: a MICU1 homodimer can be present instead of the MICU1-MICU2 heterodimer in skeletal-muscle and kidney. MICU1 is recruited to the uniplex complex by EMRE/SMDT1, and it associates with MCU at low calcium levels, occluding the pore of the MCU channel. Associates with the MICOS complex. Interacts with SLC25A23. Interacts with CHCHD4/MIA40; which introduces the interchain disulfide bond with MICU2. Interacts (when methylated) with UCP2; leading to decrease the calcium sensitivity of MICU1. Post-translationally, phosphorylation at Ser-124 by AKT1 impairs its maturation and stability. In terms of processing, asymmetric dimethylation at Arg-457 by PRMT1 decreases the calcium sensitivity of MICU1 by promoting interaction with UCP2. Degraded by YME1L1 when not complexed as homodimer or heterodimer. Not degraded when complexed as homodimer or heterodimer; the presence of the interchain disulfide bond protecting MICU1 from degradation by YME1L1.

The protein localises to the mitochondrion intermembrane space. Its subcellular location is the mitochondrion inner membrane. Functionally, calcium sensor of the mitochondrial calcium uniporter (MCU) channel, which senses calcium level via its EF-hand domains. MICU1 and MICU2 (or MICU3) form a disulfide-linked heterodimer that stimulates and inhibits MCU activity, depending on the concentration of calcium. At low calcium levels, MICU1 occludes the pore of the MCU channel, preventing mitochondrial calcium uptake. At higher calcium levels, calcium-binding to MICU1 and MICU2 (or MICU3) induces a conformational change that weakens MCU-MICU1 interactions and moves the MICU1-MICU2 heterodimer away from the pore, allowing calcium permeation through the MCU channel. Also required to protect against manganese toxicity by preventing manganese uptake by MCU: mechanistically, manganese-binding to its EF-hand domains does not induce any conformational change, maintaining MCU pore occlusion. Acts as a regulator of mitochondrial cristae structure independently of its ability to regulate the mitochondrial calcium uniporter channel. Regulates glucose-dependent insulin secretion in pancreatic beta-cells by regulating mitochondrial calcium uptake. Induces T-helper 1-mediated autoreactivity, which is accompanied by the release of IFNG. The sequence is that of Calcium uptake protein 1, mitochondrial (Micu1) from Rattus norvegicus (Rat).